The chain runs to 449 residues: Glutamyl-tRNA(Gln) amidotransferase subunit A (449 aa).

Catalysis depends on charge relay system residues Lys51 and Ser126. The disordered stretch occupies residues Ser103–Gly128. Low complexity predominate over residues Ser119–Gly128. The Acyl-ester intermediate role is filled by Ser150.

It belongs to the amidase family. GatA subfamily. Heterotrimer of A, B and C subunits.

The catalysed reaction is L-glutamyl-tRNA(Gln) + L-glutamine + ATP + H2O = L-glutaminyl-tRNA(Gln) + L-glutamate + ADP + phosphate + H(+). Its function is as follows. Allows the formation of correctly charged Gln-tRNA(Gln) through the transamidation of misacylated Glu-tRNA(Gln) in organisms which lack glutaminyl-tRNA synthetase. The reaction takes place in the presence of glutamine and ATP through an activated gamma-phospho-Glu-tRNA(Gln). This Wolinella succinogenes (strain ATCC 29543 / DSM 1740 / CCUG 13145 / JCM 31913 / LMG 7466 / NCTC 11488 / FDC 602W) (Vibrio succinogenes) protein is Glutamyl-tRNA(Gln) amidotransferase subunit A.